Reading from the N-terminus, the 107-residue chain is Probable antitoxin TacA (107 aa).

The protein belongs to the TacA antitoxin family. As to quaternary structure, forms a complex with cognate antitoxin TacT.

Its function is as follows. Probable antitoxin component of a type II toxin-antitoxin (TA) system. Should neutralize cognate toxin TacT (y4aS). The polypeptide is Probable antitoxin TacA (Sinorhizobium fredii (strain NBRC 101917 / NGR234)).